A 185-amino-acid polypeptide reads, in one-letter code: Ribosome-recycling factor (185 aa).

The protein belongs to the RRF family.

Its subcellular location is the cytoplasm. Functionally, responsible for the release of ribosomes from messenger RNA at the termination of protein biosynthesis. May increase the efficiency of translation by recycling ribosomes from one round of translation to another. The sequence is that of Ribosome-recycling factor from Francisella tularensis subsp. holarctica (strain FTNF002-00 / FTA).